The following is a 327-amino-acid chain: MKEISNIKVKIESGTKYTTDHGFHAVKDGIRNKKENSVHIRKPEWLKVKKQDSKEYLKVKSITKKHRLSTVCEEAKCPNINECWSHGTATIMLMGAVCTRACKFCSVDTGNPKGWLDKEEPQNTAESVKLMNLEYVVLTSVDRDDLVDGGAGHYAATITAIKNLDENIKVEALTPDFAGVKENVDKIINTKVDVIAQNIETVERLTHPVRDPRAGYWQTLEFLRYVKQKSPNILTKTSIMVGLGETDEEIYKTMDDARSVGVDIITLGQYMQPTKHHLSVERFVTPQQFEEYRRVGLEKGFLEVASGPMVRSSYRADRVFKRNNLDL.

Positions 72, 77, 83, 98, 102, 105, and 313 each coordinate [4Fe-4S] cluster. One can recognise a Radical SAM core domain in the interval 83–302 (CWSHGTATIM…RRVGLEKGFL (220 aa)).

It belongs to the radical SAM superfamily. Lipoyl synthase family. [4Fe-4S] cluster is required as a cofactor.

It is found in the cytoplasm. It catalyses the reaction [[Fe-S] cluster scaffold protein carrying a second [4Fe-4S](2+) cluster] + N(6)-octanoyl-L-lysyl-[protein] + 2 oxidized [2Fe-2S]-[ferredoxin] + 2 S-adenosyl-L-methionine + 4 H(+) = [[Fe-S] cluster scaffold protein] + N(6)-[(R)-dihydrolipoyl]-L-lysyl-[protein] + 4 Fe(3+) + 2 hydrogen sulfide + 2 5'-deoxyadenosine + 2 L-methionine + 2 reduced [2Fe-2S]-[ferredoxin]. It participates in protein modification; protein lipoylation via endogenous pathway; protein N(6)-(lipoyl)lysine from octanoyl-[acyl-carrier-protein]: step 2/2. Catalyzes the radical-mediated insertion of two sulfur atoms into the C-6 and C-8 positions of the octanoyl moiety bound to the lipoyl domains of lipoate-dependent enzymes, thereby converting the octanoylated domains into lipoylated derivatives. The chain is Lipoyl synthase from Francisella philomiragia subsp. philomiragia (strain ATCC 25017 / CCUG 19701 / FSC 153 / O#319-036).